The chain runs to 1217 residues: DNA-directed RNA polymerase subunit beta' (1217 aa).

Positions 60, 62, 75, and 78 each coordinate Zn(2+). Mg(2+) contacts are provided by Asp-449, Asp-451, and Asp-453. Zn(2+) contacts are provided by Cys-818, Cys-892, Cys-899, and Cys-902.

It belongs to the RNA polymerase beta' chain family. As to quaternary structure, the RNAP catalytic core consists of 2 alpha, 1 beta, 1 beta' and 1 omega subunit. When a sigma factor is associated with the core the holoenzyme is formed, which can initiate transcription. Mg(2+) serves as cofactor. Requires Zn(2+) as cofactor.

It carries out the reaction RNA(n) + a ribonucleoside 5'-triphosphate = RNA(n+1) + diphosphate. DNA-dependent RNA polymerase catalyzes the transcription of DNA into RNA using the four ribonucleoside triphosphates as substrates. The polypeptide is DNA-directed RNA polymerase subunit beta' (Enterococcus faecalis (strain ATCC 700802 / V583)).